Consider the following 123-residue polypeptide: Small ribosomal subunit protein eS8 (123 aa).

Positions methionine 1–glutamate 38 are disordered. Residues serine 7–glutamate 26 are compositionally biased toward basic residues.

As to quaternary structure, part of the 30S ribosomal subunit.

In Haloarcula marismortui (strain ATCC 43049 / DSM 3752 / JCM 8966 / VKM B-1809) (Halobacterium marismortui), this protein is Small ribosomal subunit protein eS8 (rps8e).